Here is a 373-residue protein sequence, read N- to C-terminus: Probable ethanolamine permease EutH (373 aa).

Transmembrane regions (helical) follow at residues E5–G25, I38–L58, I61–A81, I111–I131, V143–F163, I166–L186, F197–I217, I236–I256, V307–V327, and M331–I351.

This sequence belongs to the EutH family.

It is found in the cell membrane. The enzyme catalyses ethanolamine(in) = ethanolamine(out). Its function is as follows. Probably involved in the diffusion of protonated ethanolamine (EA) into the cell at low pH. At low pH most EA is protonated, and this permease becomes necessary. Contributes to bacterial survival and replication in acidic macrophage vacuoles, but not to bacterial uptake by macrophages. This is Probable ethanolamine permease EutH from Listeria monocytogenes serotype 1/2a (strain 10403S).